Here is a 192-residue protein sequence, read N- to C-terminus: Glycerol-3-phosphate acyltransferase (192 aa).

5 helical membrane-spanning segments follow: residues 5 to 25 (VVLI…ITRI), 50 to 70 (FLAA…VYIA), 78 to 98 (DFYI…PIWL), 112 to 132 (ILIA…IIVF), and 153 to 173 (SFFF…LVFL).

The protein belongs to the PlsY family. Probably interacts with PlsX.

The protein resides in the cell membrane. The enzyme catalyses an acyl phosphate + sn-glycerol 3-phosphate = a 1-acyl-sn-glycero-3-phosphate + phosphate. It participates in lipid metabolism; phospholipid metabolism. In terms of biological role, catalyzes the transfer of an acyl group from acyl-phosphate (acyl-PO(4)) to glycerol-3-phosphate (G3P) to form lysophosphatidic acid (LPA). This enzyme utilizes acyl-phosphate as fatty acyl donor, but not acyl-CoA or acyl-ACP. In Wolbachia pipientis wMel, this protein is Glycerol-3-phosphate acyltransferase.